We begin with the raw amino-acid sequence, 137 residues long: Small ribosomal subunit protein eS19 (137 aa).

The protein belongs to the eukaryotic ribosomal protein eS19 family. Component of the small ribosomal subunit.

It localises to the cytoplasm. The protein is Small ribosomal subunit protein eS19 (RPS19) of Encephalitozoon cuniculi (strain GB-M1) (Microsporidian parasite).